A 555-amino-acid polypeptide reads, in one-letter code: L-ascorbate oxidase homolog (555 aa).

The N-terminal stretch at 1–23 (MRGVKLLAACLYLAAAATVVVHA) is a signal peptide. Plastocyanin-like domains follow at residues 25 to 145 (DPYF…LRVN) and 158 to 301 (EDDY…RYEG). N-linked (GlcNAc...) asparagine glycosylation is found at N33, N61, and N110. An intrachain disulfide couples C103 to C539. N-linked (GlcNAc...) asparagine glycans are attached at residues N330, N350, and N422. Positions 345–524 (HYGKINITRT…LYASVLSPEK (180 aa)) constitute a Plastocyanin-like 3 domain.

It belongs to the multicopper oxidase family. Maximal expression in early binucleate microspores; declines considerably in mature trinucleate pollen.

The protein resides in the secreted. Its function is as follows. Probable oxidase that may be involved in pollen tube growth. This chain is L-ascorbate oxidase homolog (Bp10), found in Brassica napus (Rape).